The primary structure comprises 505 residues: Cytochrome P450 9b1 (505 aa).

A heme-binding site is contributed by Cys-449.

It belongs to the cytochrome P450 family. Heme serves as cofactor.

The protein resides in the endoplasmic reticulum membrane. The protein localises to the microsome membrane. In terms of biological role, may be involved in the metabolism of insect hormones and in the breakdown of synthetic insecticides. In Drosophila melanogaster (Fruit fly), this protein is Cytochrome P450 9b1 (Cyp9b1).